The following is a 117-amino-acid chain: Glycine cleavage system H-like protein (117 aa).

Positions 21 to 103 (IVKLGLSSQM…ESEGWFVVLQ (83 aa)) constitute a Lipoyl-binding domain. Lys62 carries the post-translational modification N6-lipoyllysine.

Belongs to the GcvH family. Requires (R)-lipoate as cofactor.

The chain is Glycine cleavage system H-like protein from Chlamydia trachomatis serovar D (strain ATCC VR-885 / DSM 19411 / UW-3/Cx).